The sequence spans 84 residues: Metallothionein-like protein 4A (84 aa).

Residues 1 to 26 (MADTGKGSSVAGCNDSCGCPSPCPGG) are disordered.

This sequence belongs to the metallothionein superfamily. Type 15 family. In terms of tissue distribution, expressed specifically in seeds.

The protein resides in the cytoplasm. The protein localises to the nucleus. Its subcellular location is the cell membrane. Its function is as follows. Metallothioneins have a high content of cysteine residues that bind various heavy metals. Functions as a metal chelator of copper (Cu) and zinc (Zn). Plays a role in storing and distributing Zn ion in seed. This chain is Metallothionein-like protein 4A (MT4A), found in Arabidopsis thaliana (Mouse-ear cress).